Here is a 412-residue protein sequence, read N- to C-terminus: Serine/threonine transporter SstT (412 aa).

Helical transmembrane passes span 16 to 36, 44 to 64, 82 to 102, 115 to 135, 141 to 161, 179 to 199, 217 to 237, 298 to 318, 330 to 350, and 357 to 377; these read LVAQIVVGLLAGALLALFLPG, LGDLFVQALKAVAPVLVFVLV, IIVLYALGTLSAAAVAVLASF, TDVIPPAGVGAVLNTLLFNIV, ALLNGNFIGILAWAIGLGFAF, VTLIVKVVIRFAPLGVFGLVA, LLVLVGAMLFMALVMNPLIVF, MGGAAITITVLTLAAVNTLGI, LLAAVCACGASGVAGGSLLLI, and FGISNDLAMQVVAVGFIIGVV.

It belongs to the dicarboxylate/amino acid:cation symporter (DAACS) (TC 2.A.23) family.

It localises to the cell inner membrane. The catalysed reaction is L-serine(in) + Na(+)(in) = L-serine(out) + Na(+)(out). The enzyme catalyses L-threonine(in) + Na(+)(in) = L-threonine(out) + Na(+)(out). In terms of biological role, involved in the import of serine and threonine into the cell, with the concomitant import of sodium (symport system). The protein is Serine/threonine transporter SstT of Stutzerimonas stutzeri (strain A1501) (Pseudomonas stutzeri).